A 975-amino-acid chain; its full sequence is Exocyst complex component 4 (975 aa).

At Ala2 the chain carries N-acetylalanine. N6-acetyllysine is present on Lys9. Ser32 carries the phosphoserine modification. A coiled-coil region spans residues 32-114; it reads STSDDVEDRE…HCKRDELRKL (83 aa). Residues 211–224 are compositionally biased toward basic and acidic residues; it reads RNKEKGKMSSHGKD. The disordered stretch occupies residues 211–230; the sequence is RNKEKGKMSSHGKDPSPGPL. Ser226 carries the post-translational modification Phosphoserine. Thr238 carries the phosphothreonine modification. At Ser469 the chain carries Phosphoserine.

Belongs to the SEC8 family. The exocyst complex is composed of EXOC1, EXOC2, EXOC3, EXOC4, EXOC5, EXOC6, EXOC7 and EXOC8. Interacts with BIRC6/bruce. Interacts with MYRIP. Interacts with SH3BP1; required for the localization of both SH3BP1 and the exocyst to the leading edge of migrating cells. Interacts with SLC6A9. In terms of tissue distribution, expressed in the striatum (at protein level).

The protein localises to the midbody. The protein resides in the midbody ring. Its subcellular location is the cell projection. It localises to the cytoplasm. It is found in the cytoskeleton. The protein localises to the microtubule organizing center. The protein resides in the centrosome. Component of the exocyst complex involved in the docking of exocytic vesicles with fusion sites on the plasma membrane. In Mus musculus (Mouse), this protein is Exocyst complex component 4 (Exoc4).